Consider the following 284-residue polypeptide: NADH-cytochrome b5 reductase 1 (284 aa).

A helical membrane pass occupies residues 8–28 (PLVIFSTLAAIILAAVAVYVV). One can recognise an FAD-binding FR-type domain in the interval 41 to 144 (DVFQKFPLIE…RGPKGFFTYT (104 aa)). FAD contacts are provided by residues 124 to 139 (DSKS…GPKG) and 150 to 182 (HLGM…KISL).

It belongs to the flavoprotein pyridine nucleotide cytochrome reductase family. As to quaternary structure, monomer. Component of the 2-(3-amino-3-carboxypropyl)histidine synthase complex composed of DPH1, DPH2, DPH3 and a NADH-dependent reductase, predominantly CBR1. FAD serves as cofactor.

It is found in the mitochondrion outer membrane. The catalysed reaction is 2 Fe(III)-[cytochrome b5] + NADH = 2 Fe(II)-[cytochrome b5] + NAD(+) + H(+). The enzyme catalyses 2 Fe(3+)-[Dph3] + NADH = 2 Fe(2+)-[Dph3] + NAD(+) + H(+). Its pathway is protein modification; peptidyl-diphthamide biosynthesis. NADH-dependent reductase for DPH3 and cytochrome b5. Required for the first step of diphthamide biosynthesis, a post-translational modification of histidine which occurs in elongation factor 2. DPH1 and DPH2 transfer a 3-amino-3-carboxypropyl (ACP) group from S-adenosyl-L-methionine (SAM) to a histidine residue, the reaction is assisted by a reduction system comprising DPH3 and a NADH-dependent reductase, predominantly CBR1. By reducing DPH3, also involved in the formation of the tRNA wobble base modification mcm5s 2U (5-methoxycarbonylmethyl-2-thiouridine), mediated by the elongator complex. The cytochrome b5/NADH cytochrome b5 reductase electron transfer system supports the catalytic activity of several sterol biosynthetic enzymes. In Meyerozyma guilliermondii (strain ATCC 6260 / CBS 566 / DSM 6381 / JCM 1539 / NBRC 10279 / NRRL Y-324) (Yeast), this protein is NADH-cytochrome b5 reductase 1 (CBR1).